The primary structure comprises 491 residues: Acetyl-coenzyme A carboxylase carboxyl transferase subunit beta, chloroplastic (491 aa).

The tract at residues 26–49 (ARPRPIGNTNGSQDPSINDRDKNG) is disordered. Residues 32 to 41 (GNTNGSQDPS) are compositionally biased toward polar residues. The CoA carboxyltransferase N-terminal domain occupies 222–491 (LWVQCDNCYG…PLNHNSQVKR (270 aa)). The Zn(2+) site is built by Cys226, Cys229, Cys245, and Cys248. A C4-type zinc finger spans residues 226–248 (CDNCYGLNYKKIFSSKMNICEQC).

Belongs to the AccD/PCCB family. Acetyl-CoA carboxylase is a heterohexamer composed of biotin carboxyl carrier protein, biotin carboxylase and 2 subunits each of ACCase subunit alpha and ACCase plastid-coded subunit beta (accD). Zn(2+) is required as a cofactor.

It is found in the plastid. The protein localises to the chloroplast stroma. The catalysed reaction is N(6)-carboxybiotinyl-L-lysyl-[protein] + acetyl-CoA = N(6)-biotinyl-L-lysyl-[protein] + malonyl-CoA. It participates in lipid metabolism; malonyl-CoA biosynthesis; malonyl-CoA from acetyl-CoA: step 1/1. Component of the acetyl coenzyme A carboxylase (ACC) complex. Biotin carboxylase (BC) catalyzes the carboxylation of biotin on its carrier protein (BCCP) and then the CO(2) group is transferred by the transcarboxylase to acetyl-CoA to form malonyl-CoA. This is Acetyl-coenzyme A carboxylase carboxyl transferase subunit beta, chloroplastic from Ceratophyllum demersum (Rigid hornwort).